A 668-amino-acid chain; its full sequence is WD repeat-containing protein 48 homolog (668 aa).

WD repeat units lie at residues 26 to 65, 71 to 110, 113 to 152, 164 to 203, 206 to 245, 248 to 287, 290 to 329, and 350 to 389; these read QHRN…SEKY, HHND…CMST, THRD…ALTA, GSKD…RRMK, GHTE…CVQT, VHKE…NKTL, EEQA…RCTL, and KGGA…KKEQ. Residues 592 to 616 are disordered; sequence ETTPSGGNANNSLQNSQSDANSEGS.

This sequence belongs to the WD repeat WDR48 family. In terms of assembly, catalytic component of the Usp12-46 deubiquitylase complex consisting of Usp12-46, Wdr20 and Uaf1; regulatory subunit that, together wtih Wdr20, stabilizes Usp12-46. The Usp12-46 deubiquitylase complex associates with arr/arrow; the interaction leads to deubiquitination and stabilization of arr/arrow.

Functionally, regulatory component of the Usp12-46 deubiquitylase complex. activates deubiquitination by increasing the catalytic turnover without increasing the affinity of deubiquitinating enzymes for the substrate. The complex deubiquitylates the wg/wingless-signaling receptor arr/arrow, which stabilizes the receptor and increases its concentration at the cell surface; this enhances the sensitivity of cells to wg/wingless-signal stimulation. This increases the amplitude and spatial range of the signaling response to the wg/wingless morphogen gradient, facilitating the precise concentration-dependent regulation of its target genes. Together with Wdr20 and Usp12-46 required for wg/wingless-mediated signaling in the wing imaginal disc and for wg/wingless-dependent regulation of intestinal stem cell proliferation. The polypeptide is WD repeat-containing protein 48 homolog (Drosophila melanogaster (Fruit fly)).